Here is a 1372-residue protein sequence, read N- to C-terminus: DNA-directed RNA polymerase subunit beta' (1372 aa).

The Zn(2+) site is built by C69, C71, C84, and C87. Residues D460, D462, and D464 each coordinate Mg(2+). C808, C882, C889, and C892 together coordinate Zn(2+).

The protein belongs to the RNA polymerase beta' chain family. In terms of assembly, the RNAP catalytic core consists of 2 alpha, 1 beta, 1 beta' and 1 omega subunit. When a sigma factor is associated with the core the holoenzyme is formed, which can initiate transcription. Mg(2+) is required as a cofactor. The cofactor is Zn(2+).

The catalysed reaction is RNA(n) + a ribonucleoside 5'-triphosphate = RNA(n+1) + diphosphate. Functionally, DNA-dependent RNA polymerase catalyzes the transcription of DNA into RNA using the four ribonucleoside triphosphates as substrates. This chain is DNA-directed RNA polymerase subunit beta', found in Rickettsia conorii (strain ATCC VR-613 / Malish 7).